The chain runs to 256 residues: uncharacterized protein (256 aa).

A run of 6 helical transmembrane segments spans residues 6–26, 29–49, 61–81, 145–165, 175–195, and 218–238; these read TSFITQSLVYSLLVVGIVSFL, LALVGLLLPGIILMTTLGTFI, ISGTTGCLLGDWISYYIGLYF, IIGCILWPPVYFFPGIVTGIA, YYFKWLLLLISILIWLGIWLI, and IGWLAILTMSSGILSLIAIQF.

This sequence belongs to the DedA family.

It is found in the cell membrane. This is an uncharacterized protein from Buchnera aphidicola subsp. Acyrthosiphon pisum (strain APS) (Acyrthosiphon pisum symbiotic bacterium).